Reading from the N-terminus, the 477-residue chain is Mitochondrial adenyl nucleotide antiporter SLC25A24 (477 aa).

Residues 1–173 (MLRWLRGFVL…RFWKHSTGID (173 aa)) form a regulatory N-terminal domain region. Over 1-197 (MLRWLRGFVL…EKKSGQWWRQ (197 aa)) the chain is Mitochondrial intermembrane. 4 consecutive EF-hand domains span residues 19 to 54 (EPPTRYETLFQKLDRNGDGVVDISELQEGLKSLGIP), 61 to 85 (EKIFTTGDVNKDGKLDFEEFMKYLK), 86 to 121 (DHEKKMKLAFKSLDKNNDGKIEASEIVQSLQILGLT), and 122 to 157 (ISEQQAELILQSIDADGTMTVDWNEWRDYFLFNPVT). Ca(2+) contacts are provided by Asp32, Asn34, Asp36, Val38, Glu43, Asp68, Asn70, Asp72, Lys74, Glu79, Asp99, Asn101, Asp103, Lys105, Glu110, Asp135, Asp137, Thr139, Thr141, and Glu146. The tract at residues 159–168 (IEEIIRFWKH) is linker region. Positions 174–477 (IGDSLTIPDE…MKQTLGVTQK (304 aa)) are C-terminal transmembrane transporter domain. Solcar repeat units lie at residues 192–278 (GQWW…YKKL), 286–371 (IGTF…LKSH), and 383–471 (PGVM…MKQT). A helical membrane pass occupies residues 198-215 (LLAGGVAGAVSRTSTAPL). At 216-252 (DRLKVMMQVHGSKSAKMNIYGGFQQMVKEGGIRSLWR) the chain is on the mitochondrial matrix side. Residues 253–272 (GNGTNVIKIAPETAVKFWAY) traverse the membrane as a helical segment. The Mitochondrial intermembrane portion of the chain corresponds to 273–295 (EQYKKLLTEEGQKIGTFERFVSG). A helical membrane pass occupies residues 296 to 309 (SMAGATAQTFIYPM). Residues 310–345 (EVLKTRLAVGKTGQYSGMFDCAKKILKYEGMGAFYK) lie on the Mitochondrial matrix side of the membrane. Lys320 is modified (N6-acetyllysine; alternate). Lys320 carries the N6-succinyllysine; alternate modification. The residue at position 336 (Lys336) is an N6-acetyllysine. Residues 346–365 (GYVPNLLGIIPYAGIDLAVY) form a helical membrane-spanning segment. Residues 366-388 (ELLKSHWLDNFAKDSVNPGVMVL) are Mitochondrial intermembrane-facing. The chain crosses the membrane as a helical span at residues 389 to 406 (LGCGALSSTCGQLASYPL). Over 407 to 445 (ALVRTRMQAQAMIEKSPQLNMVGLFRRILSKEGLPGLYR) the chain is Mitochondrial matrix. An N6-acetyllysine; alternate modification is found at Lys437. Lys437 bears the N6-succinyllysine; alternate mark. The helical transmembrane segment at 446 to 465 (GITPNFMKVLPAVGISYVVY) threads the bilayer. Topologically, residues 466 to 477 (ENMKQTLGVTQK) are mitochondrial intermembrane.

The protein belongs to the mitochondrial carrier (TC 2.A.29) family. As to quaternary structure, monomer.

The protein resides in the mitochondrion inner membrane. It carries out the reaction Mg(2+)(out) + phosphate(in) + ATP(out) = Mg(2+)(in) + phosphate(out) + ATP(in). The enzyme catalyses ADP(out) + phosphate(in) + H(+)(out) = ADP(in) + phosphate(out) + H(+)(in). It catalyses the reaction AMP(out) + phosphate(in) = AMP(in) + phosphate(out). The catalysed reaction is phosphate(in) + ATP(out) + 2 H(+)(out) = phosphate(out) + ATP(in) + 2 H(+)(in). It carries out the reaction dADP(in) + ADP(out) = dADP(out) + ADP(in). The enzyme catalyses Mg(2+)(in) + ADP(out) + ATP(in) + H(+)(out) = Mg(2+)(out) + ADP(in) + ATP(out) + H(+)(in). It catalyses the reaction ADP(out) + diphosphate(in) = ADP(in) + diphosphate(out). The catalysed reaction is dAMP(in) + ADP(out) + H(+)(out) = dAMP(out) + ADP(in) + H(+)(in). It carries out the reaction 3'-AMP(in) + ADP(out) + H(+)(out) = 3'-AMP(out) + ADP(in) + H(+)(in). The enzyme catalyses dAMP(out) + phosphate(in) = dAMP(in) + phosphate(out). It catalyses the reaction 3'-AMP(out) + phosphate(in) = 3'-AMP(in) + phosphate(out). The catalysed reaction is dADP(out) + phosphate(in) + H(+)(out) = dADP(in) + phosphate(out) + H(+)(in). Its activity is regulated as follows. Activated by an increase in cytosolic calcium levels that induce a conformational change of the N-terminal regulatory domain, uncapping the channel and allowing transport. Inhibited by bathophenanthroline, mersalyl, p-hydroxymercuribenzoate, bromcresol purple and tannic acid. Functionally, electroneutral antiporter that mediates the transport of adenyl nucleotides through the inner mitochondrial membrane. Originally identified as an ATP-magnesium/inorganic phosphate antiporter, it also acts as a broad specificity adenyl nucleotide antiporter. By regulating the mitochondrial matrix adenyl nucleotide pool could adapt to changing cellular energetic demands and indirectly regulate adenyl nucleotide-dependent metabolic pathways. In vitro, a low activity is also observed with guanyl and pyrimidine nucleotides. May play a role in protecting cells against oxidative stress-induced cell death, by buffering calcium levels in the mitochondrial matrix through the formation of calcium-phosphate precipitates. This Bos taurus (Bovine) protein is Mitochondrial adenyl nucleotide antiporter SLC25A24 (SLC25A24).